The chain runs to 259 residues: Dihydroorotate dehydrogenase B (NAD(+)), electron transfer subunit (259 aa).

The FAD-binding FR-type domain occupies 3–103; that stretch reads KKQGRLTIVK…LGPLGQGFPL (101 aa). Residues 54-57, 71-73, and 78-79 contribute to the FAD site; these read RPIS, IYR, and GT. Residues C222, C227, C230, and C246 each contribute to the [2Fe-2S] cluster site.

This sequence belongs to the PyrK family. Heterotetramer of 2 PyrK and 2 PyrD type B subunits. The cofactor is [2Fe-2S] cluster. It depends on FAD as a cofactor.

Its pathway is pyrimidine metabolism; UMP biosynthesis via de novo pathway; orotate from (S)-dihydroorotate (NAD(+) route): step 1/1. Functionally, responsible for channeling the electrons from the oxidation of dihydroorotate from the FMN redox center in the PyrD type B subunit to the ultimate electron acceptor NAD(+). The chain is Dihydroorotate dehydrogenase B (NAD(+)), electron transfer subunit from Shouchella clausii (strain KSM-K16) (Alkalihalobacillus clausii).